We begin with the raw amino-acid sequence, 343 residues long: Uroporphyrinogen decarboxylase (343 aa).

Substrate is bound by residues 23–27, aspartate 73, tyrosine 150, serine 205, and histidine 322; that span reads RQAGR.

It belongs to the uroporphyrinogen decarboxylase family. As to quaternary structure, homodimer.

The protein resides in the cytoplasm. It catalyses the reaction uroporphyrinogen III + 4 H(+) = coproporphyrinogen III + 4 CO2. It participates in porphyrin-containing compound metabolism; protoporphyrin-IX biosynthesis; coproporphyrinogen-III from 5-aminolevulinate: step 4/4. In terms of biological role, catalyzes the decarboxylation of four acetate groups of uroporphyrinogen-III to yield coproporphyrinogen-III. The polypeptide is Uroporphyrinogen decarboxylase (Cereibacter sphaeroides (strain ATCC 17025 / ATH 2.4.3) (Rhodobacter sphaeroides)).